The following is a 152-amino-acid chain: Protein SprT-like (152 aa).

In terms of domain architecture, SprT-like spans Gln-7–Ile-148. Residue His-67 participates in Zn(2+) binding. Glu-68 is a catalytic residue. His-71 lines the Zn(2+) pocket.

It belongs to the SprT family. Zn(2+) is required as a cofactor.

Its subcellular location is the cytoplasm. The protein is Protein SprT-like of Bacillus anthracis (strain A0248).